The sequence spans 129 residues: MTIRKFHYLILFITIIAICSLFRIKDRVSTLNYQLRSVIKQINSENNNINILKAEQAYLLLPTRLEKLAAAYLKLEIVKSYQMINDPLAPNIEQNIKFNHNISISKSNKWRYKRIMNNKYIQTVSSRVK.

The helical transmembrane segment at 8-24 threads the bilayer; it reads YLILFITIIAICSLFRI.

The protein resides in the membrane. This is an uncharacterized protein from Rickettsia prowazekii (strain Madrid E).